Consider the following 405-residue polypeptide: Methylamine dehydrogenase heavy chain (405 aa).

An N-terminal signal peptide occupies residues 1–36 (MTTFDHPSMIRQPKPTGLAGGLVLAALMLSSSLALA).

This sequence belongs to the aromatic amine dehydrogenase heavy chain family. Tetramer of two light and two heavy chains.

It is found in the periplasm. It catalyses the reaction 2 oxidized [amicyanin] + methylamine + H2O = 2 reduced [amicyanin] + formaldehyde + NH4(+) + 2 H(+). In terms of biological role, methylamine dehydrogenase carries out the oxidation of methylamine. Electrons are passed from methylamine dehydrogenase to amicyanin. The sequence is that of Methylamine dehydrogenase heavy chain (mauB) from Methylophilus methylotrophus (Bacterium W3A1).